The chain runs to 126 residues: Aspartate 1-decarboxylase (126 aa).

The active-site Schiff-base intermediate with substrate; via pyruvic acid is the serine 25. Serine 25 is modified (pyruvic acid (Ser)). Threonine 57 contributes to the substrate binding site. Tyrosine 58 serves as the catalytic Proton donor. Substrate is bound at residue 73 to 75; the sequence is GAA.

Belongs to the PanD family. As to quaternary structure, heterooctamer of four alpha and four beta subunits. Pyruvate serves as cofactor. Is synthesized initially as an inactive proenzyme, which is activated by self-cleavage at a specific serine bond to produce a beta-subunit with a hydroxyl group at its C-terminus and an alpha-subunit with a pyruvoyl group at its N-terminus.

The protein resides in the cytoplasm. The catalysed reaction is L-aspartate + H(+) = beta-alanine + CO2. Its pathway is cofactor biosynthesis; (R)-pantothenate biosynthesis; beta-alanine from L-aspartate: step 1/1. Functionally, catalyzes the pyruvoyl-dependent decarboxylation of aspartate to produce beta-alanine. The protein is Aspartate 1-decarboxylase of Alkalilimnicola ehrlichii (strain ATCC BAA-1101 / DSM 17681 / MLHE-1).